The primary structure comprises 780 residues: Striatin (780 aa).

A coiled-coil region spans residues 53–120 (LHFLQHEWAR…QERAKYHKLK (68 aa)). The interval 55 to 63 (FLQHEWARF) is caveolin-binding. A disordered region spans residues 123-150 (TELNQGDMKPPSYDSDEGNETEVQPQQN). S137 bears the Phosphoserine mark. A calmodulin-binding region spans residues 149 to 166 (QNSQLMWKQGRQLLRQYL). A Phosphothreonine modification is found at T225. Phosphoserine occurs at positions 227, 229, 245, and 259. 3 disordered regions span residues 289-312 (DFLV…DWEK), 334-353 (EQYK…NRSK), and 364-392 (VDEL…ELSR). The span at 299-312 (NESRSAGDGTDWEK) shows a compositional bias: basic and acidic residues. Over residues 338–351 (KERKGKKGVKRPNR) the composition is skewed to basic residues. WD repeat units follow at residues 461 to 500 (SHFD…PAKK), 514 to 553 (AHKG…VDPY), 567 to 606 (GHTD…PALS), 662 to 701 (SSSC…LIHS), 704 to 743 (AHLE…CIQE), and 750 to 780 (KFEE…KVFV).

This sequence belongs to the WD repeat striatin family. In terms of assembly, part of the core of STRIPAK complexes composed of PP2A catalytic and scaffolding subunits, the striatins (PP2A regulatory subunits), the striatin-associated proteins MOB4, STRIP1 and STRIP2, PDCD10 and members of the STE20 kinases, such as STK24 and STK26. Interacts with CTTNBP2; this interaction may regulate dendritic spine distribution of STRN. Activation of glutamate receptors weakens the interaction with CTTNBP2. As to expression, mainly expressed in brain but is also expressed at low levels in various tissues such as kidney, spleen, skeletal muscle and lung.

The protein localises to the cytoplasm. The protein resides in the membrane. Its subcellular location is the cell projection. It localises to the dendritic spine. Functionally, calmodulin-binding scaffolding protein which is the center of the striatin-interacting phosphatase and kinase (STRIPAK) complexes. STRIPAK complexes have critical roles in protein (de)phosphorylation and are regulators of multiple signaling pathways including Hippo, MAPK, nuclear receptor and cytoskeleton remodeling. Different types of STRIPAK complexes are involved in a variety of biological processes such as cell growth, differentiation, apoptosis, metabolism and immune regulation. In Mus musculus (Mouse), this protein is Striatin (Strn).